The following is a 133-amino-acid chain: Small ribosomal subunit protein eS8 (133 aa).

Residues 1-34 (MGVWHGRSLRKPTGGRIRPHRKKRKFEMGNPPTE) form a disordered region.

It belongs to the eukaryotic ribosomal protein eS8 family. As to quaternary structure, part of the 30S ribosomal subunit.

This chain is Small ribosomal subunit protein eS8, found in Methanopyrus kandleri (strain AV19 / DSM 6324 / JCM 9639 / NBRC 100938).